A 259-amino-acid chain; its full sequence is NADP-dependent 3-hydroxy acid dehydrogenase (259 aa).

An NADP(+)-binding site is contributed by isoleucine 11. Serine 42 bears the Phosphoserine mark. The residue at position 43 (threonine 43) is a Phosphothreonine. Positions 65, 92, 126, 158, 162, and 191 each coordinate NADP(+). Tyrosine 158 (proton acceptor) is an active-site residue. The Lowers pKa of active site Tyr role is filled by lysine 162.

Belongs to the short-chain dehydrogenases/reductases (SDR) family. As to quaternary structure, homotetramer.

The protein resides in the cytoplasm. The protein localises to the nucleus. The catalysed reaction is L-allo-threonine + NADP(+) = aminoacetone + CO2 + NADPH. Its function is as follows. NADP-dependent dehydrogenase with broad substrate specificity acting on 3-hydroxy acids. Catalyzes the NADP-dependent oxidation of L-allo-threonine to L-2-amino-3-keto-butyrate, which is spontaneously decarboxylated into aminoacetone. Also acts on D-threonine, L-serine, D-serine, D-3-hydroxyisobutyrate, L-3-hydroxyisobutyrate, D-glycerate and L-glycerate. This is NADP-dependent 3-hydroxy acid dehydrogenase from Schizosaccharomyces pombe (strain 972 / ATCC 24843) (Fission yeast).